The following is a 273-amino-acid chain: Chlorophyll a-b binding protein 8, chloroplastic (273 aa).

The N-terminal 32 residues, 1-32, are a transit peptide targeting the chloroplast; that stretch reads MATQALISSSSISTSAEAARQIIGSRISQSVT. Position 33 is an N2-acetylarginine (Arg-33). Chlorophyll b is bound at residue Trp-56. Residues Phe-76, Ser-82, and Glu-100 each coordinate chlorophyll a. Arg-105 is a binding site for chlorophyll b. The helical transmembrane segment at 106 to 126 threads the bilayer; the sequence is FAMLGAAGAIAPEILGKAGLI. Positions 140, 167, and 170 each coordinate chlorophyll b. Positions 224, 225, 228, 230, 242, and 257 each coordinate chlorophyll a. A helical transmembrane segment spans residues 231–251; it reads LAMLAILGYFIQALVTGVGPY.

The protein belongs to the light-harvesting chlorophyll a/b-binding (LHC) protein family. In terms of assembly, the LHC complex consists of chlorophyll a-b binding proteins. Binds at least 14 chlorophylls (8 Chl-a and 6 Chl-b) and carotenoids such as lutein and neoxanthin. serves as cofactor. Post-translationally, photoregulated by reversible phosphorylation of its threonine residues.

It localises to the plastid. It is found in the chloroplast thylakoid membrane. The light-harvesting complex (LHC) functions as a light receptor, it captures and delivers excitation energy to photosystems with which it is closely associated. This chain is Chlorophyll a-b binding protein 8, chloroplastic (CAB8), found in Solanum lycopersicum (Tomato).